We begin with the raw amino-acid sequence, 32 residues long: Ranatuerin-3 (32 aa).

A disulfide bridge links cysteine 23 with cysteine 28.

Belongs to the frog skin active peptide (FSAP) family. Ranatuerin subfamily. As to expression, expressed by the skin glands.

The protein resides in the secreted. Antibacterial activity against Gram-positive bacterium S.aureus (MIC=60 uM). Shows no detectable hemolytic activity towards human erythrocytes. The sequence is that of Ranatuerin-3 from Aquarana catesbeiana (American bullfrog).